Consider the following 291-residue polypeptide: GTPase Era (291 aa).

The Era-type G domain maps to 2–167 (KSGFVSIIGR…LDEIVKYLDK (166 aa)). The G1 stretch occupies residues 10-17 (GRTNAGKS). 10–17 (GRTNAGKS) lines the GTP pocket. Residues 36-40 (NATRR) are G2. The interval 57-60 (DTPG) is G3. GTP is bound by residues 57-61 (DTPGL) and 116-119 (NKVD). The tract at residues 116–119 (NKVD) is G4. Positions 146-148 (YSS) are G5. Residues 186-274 (YRDFILESIY…LLKLFVTVKK (89 aa)) form the KH type-2 domain.

Belongs to the TRAFAC class TrmE-Era-EngA-EngB-Septin-like GTPase superfamily. Era GTPase family. Monomer.

The protein localises to the cytoplasm. Its subcellular location is the cell inner membrane. Its function is as follows. An essential GTPase that binds both GDP and GTP, with rapid nucleotide exchange. Plays a role in 16S rRNA processing and 30S ribosomal subunit biogenesis and possibly also in cell cycle regulation and energy metabolism. The chain is GTPase Era from Campylobacter jejuni subsp. jejuni serotype O:6 (strain 81116 / NCTC 11828).